The primary structure comprises 427 residues: Trigger factor (427 aa).

Positions 163–248 constitute a PPIase FKBP-type domain; sequence GDTVVIDFVG…IHEVKEKEVP (86 aa).

It belongs to the FKBP-type PPIase family. Tig subfamily.

Its subcellular location is the cytoplasm. The catalysed reaction is [protein]-peptidylproline (omega=180) = [protein]-peptidylproline (omega=0). Involved in protein export. Acts as a chaperone by maintaining the newly synthesized protein in an open conformation. Functions as a peptidyl-prolyl cis-trans isomerase. In Streptococcus sanguinis (strain SK36), this protein is Trigger factor.